The primary structure comprises 291 residues: Formamidopyrimidine-DNA glycosylase (291 aa).

The active-site Schiff-base intermediate with DNA is the proline 2. Glutamate 3 serves as the catalytic Proton donor. Lysine 60 acts as the Proton donor; for beta-elimination activity in catalysis. Residues histidine 108 and arginine 127 each contribute to the DNA site. An FPG-type zinc finger spans residues 257–291 (WVYRRGGQACRICSTPIRRESLCGRGTHWCPNCQR). The Proton donor; for delta-elimination activity role is filled by arginine 281.

This sequence belongs to the FPG family. Monomer. Requires Zn(2+) as cofactor.

It catalyses the reaction Hydrolysis of DNA containing ring-opened 7-methylguanine residues, releasing 2,6-diamino-4-hydroxy-5-(N-methyl)formamidopyrimidine.. The enzyme catalyses 2'-deoxyribonucleotide-(2'-deoxyribose 5'-phosphate)-2'-deoxyribonucleotide-DNA = a 3'-end 2'-deoxyribonucleotide-(2,3-dehydro-2,3-deoxyribose 5'-phosphate)-DNA + a 5'-end 5'-phospho-2'-deoxyribonucleoside-DNA + H(+). Its function is as follows. Involved in base excision repair of DNA damaged by oxidation or by mutagenic agents. Acts as a DNA glycosylase that recognizes and removes damaged bases. Has a preference for oxidized purines, such as 7,8-dihydro-8-oxoguanine (8-oxoG). Has AP (apurinic/apyrimidinic) lyase activity and introduces nicks in the DNA strand. Cleaves the DNA backbone by beta-delta elimination to generate a single-strand break at the site of the removed base with both 3'- and 5'-phosphates. The polypeptide is Formamidopyrimidine-DNA glycosylase (Prochlorococcus marinus (strain MIT 9313)).